The following is a 244-amino-acid chain: Uridylate kinase (244 aa).

16 to 19 is a binding site for ATP; sequence KLSG. Gly-58 is a binding site for UMP. ATP is bound by residues Gly-59 and Arg-63. UMP contacts are provided by residues Asp-78 and 139–146; that span reads VGAPYFTT. Residues Thr-166, Tyr-172, and Asp-175 each contribute to the ATP site.

The protein belongs to the UMP kinase family. Homohexamer.

The protein resides in the cytoplasm. The catalysed reaction is UMP + ATP = UDP + ADP. The protein operates within pyrimidine metabolism; CTP biosynthesis via de novo pathway; UDP from UMP (UMPK route): step 1/1. Inhibited by UTP. Its function is as follows. Catalyzes the reversible phosphorylation of UMP to UDP. The protein is Uridylate kinase of Novosphingobium aromaticivorans (strain ATCC 700278 / DSM 12444 / CCUG 56034 / CIP 105152 / NBRC 16084 / F199).